Reading from the N-terminus, the 407-residue chain is Argininosuccinate synthase (407 aa).

ATP is bound by residues 11-19 (AYSGGLDTS) and A39. Positions 90 and 95 each coordinate L-citrulline. G120 is an ATP binding site. L-aspartate is bound by residues T122, N126, and D127. N126 is a binding site for L-citrulline. The L-citrulline site is built by R130, S179, S188, E264, and Y276.

This sequence belongs to the argininosuccinate synthase family. Type 1 subfamily. As to quaternary structure, homotetramer.

It localises to the cytoplasm. The enzyme catalyses L-citrulline + L-aspartate + ATP = 2-(N(omega)-L-arginino)succinate + AMP + diphosphate + H(+). The protein operates within amino-acid biosynthesis; L-arginine biosynthesis; L-arginine from L-ornithine and carbamoyl phosphate: step 2/3. The protein is Argininosuccinate synthase of Roseiflexus sp. (strain RS-1).